The sequence spans 407 residues: Growth/differentiation factor 11 (407 aa).

The N-terminal stretch at M1–A24 is a signal peptide. Positions A25–R298 are excised as a propeptide. N94 carries N-linked (GlcNAc...) asparagine glycosylation. Disulfide bonds link C304-C314, C313-C372, C341-C404, and C345-C406.

It belongs to the TGF-beta family. In terms of assembly, homodimer; disulfide-linked. Interacts directly with ACVR2B. Interacts directly with ACVR2A. Interacts with ACVR1B, TGFBR1 and ACVR1C in an ACVR2B-dependent manner. Interacts with FST isoform 2/FS-288. In terms of processing, synthesized as large precursor molecule that undergoes proteolytic cleavage by furin-like proteases. This produces an inactive form consisting of the mature C-terminal portion non-covalently bound to its cleaved N-terminal propeptide. Activation of the mature form requires additional cleavage of the propeptide by a tolloid-like metalloproteinase. As to expression, in the embryo, strong expression is seen in the palatal epithelia, including the medial edge epithelial and midline epithelial seam of the palatal shelves. Less pronounced expression is also seen throughout the palatal shelf and tongue mesenchyme.

The protein resides in the secreted. Its function is as follows. Secreted signal that acts globally to regulate anterior/posterior axial patterning during development. May play critical roles in patterning both mesodermal and neural tissues. It is required for proper vertebral patterning and orofacial development. Signals through activin receptors type-2, ACVR2A and ACVR2B, and activin receptors type-1, ACVR1B, ACVR1C and TGFBR1 leading to the phosphorylation of SMAD2 and SMAD3. This is Growth/differentiation factor 11 (GDF11) from Homo sapiens (Human).